Reading from the N-terminus, the 110-residue chain is Large ribosomal subunit protein uL22 (110 aa).

This sequence belongs to the universal ribosomal protein uL22 family. Part of the 50S ribosomal subunit.

This protein binds specifically to 23S rRNA; its binding is stimulated by other ribosomal proteins, e.g. L4, L17, and L20. It is important during the early stages of 50S assembly. It makes multiple contacts with different domains of the 23S rRNA in the assembled 50S subunit and ribosome. Functionally, the globular domain of the protein is located near the polypeptide exit tunnel on the outside of the subunit, while an extended beta-hairpin is found that lines the wall of the exit tunnel in the center of the 70S ribosome. This Vibrio campbellii (strain ATCC BAA-1116) protein is Large ribosomal subunit protein uL22.